The following is a 601-amino-acid chain: MDTTKNNDEFDISYFLTCSIFGFILWILTEQILKYYNKTNKNNKYNLPKGPSFLKWFINYLFNFYDLKLSNNKEEDNNNNNNKSNNSLSQEELIEDTSENTVLKWFNQLNSDNYSVSFFGRPMIFTRDTTISKYILSSNNIDNYTKPPDSSGVLIRLAQNSILMSEGDQWRYHRSIINQPFSSKNVKLMIPTIITTINKLINHLNNNNNNNNNNNNNNNNNNNNNNNNNNNNNNNNNNNNNNNNNNNNNNNNNNNNNNTIIIDIHSYCTKLTFDIIGKLSIGYDFNSIESSDNDNDNNDDDDISKQFDFILNEMIRPIRRFSSYLPLYNDIKLFKFLNELESIIKGAINSRSLITDNNNNKTYKKNFLLDNLLDDNVKEKDIIGNINTFLLAGHETSANLLTFIFYLLSTHNNVQNDLYNHLIENQKKKINKDNKFTEEDEDYQSIEFLDWVIYETLRLFPPAPMIGRTSKNDDILKSGNNNNNNNNNISIPSETLILISVYAIHRDPKLWKDPNIFNPYRWKNIENINNRSDFIPFSSGGRVCVGQKFSIVEARIIISKLILNFELSFNNLKSKPFKIYQRATLTPKYPVFLNFKKRENK.

The chain crosses the membrane as a helical span at residues 12–32; that stretch reads ISYFLTCSIFGFILWILTEQI. The interval 205 to 253 is disordered; the sequence is NNNNNNNNNNNNNNNNNNNNNNNNNNNNNNNNNNNNNNNNNNNNNNNNN. Heme is bound at residue cysteine 544.

Belongs to the cytochrome P450 family. The cofactor is heme.

The protein resides in the membrane. This chain is Probable cytochrome P450 525A1 (cyp525A1), found in Dictyostelium discoideum (Social amoeba).